The primary structure comprises 359 residues: Pyruvate dehydrogenase E1 component subunit beta, mitochondrial (359 aa).

A mitochondrion-targeting transit peptide spans 1-30 (MAVVAGLVRGPLRQASGLLKRRFHRSAPAA). At Y67 the chain carries Phosphotyrosine. E89 lines the thiamine diphosphate pocket. Positions 142, 190, 191, 193, and 195 each coordinate K(+). An N6-acetyllysine modification is found at K354.

In terms of assembly, heterotetramer of two PDHA1 and two PDHB subunits. The heterotetramer interacts with DLAT, and is part of the multimeric pyruvate dehydrogenase complex that contains multiple copies of pyruvate dehydrogenase (E1), dihydrolipoamide acetyltransferase (DLAT, E2) and lipoamide dehydrogenase (DLD, E3). These subunits are bound to an inner core composed of about 48 DLAT and 12 PDHX molecules. Interacts with DLAT. It depends on thiamine diphosphate as a cofactor.

Its subcellular location is the mitochondrion matrix. The enzyme catalyses N(6)-[(R)-lipoyl]-L-lysyl-[protein] + pyruvate + H(+) = N(6)-[(R)-S(8)-acetyldihydrolipoyl]-L-lysyl-[protein] + CO2. Functionally, the pyruvate dehydrogenase complex catalyzes the overall conversion of pyruvate to acetyl-CoA and CO(2), and thereby links the glycolytic pathway to the tricarboxylic cycle. The chain is Pyruvate dehydrogenase E1 component subunit beta, mitochondrial (Pdhb) from Mus musculus (Mouse).